The sequence spans 169 residues: Ureidoglycolate lyase (169 aa).

It belongs to the ureidoglycolate lyase family. As to quaternary structure, homodimer. It depends on Ni(2+) as a cofactor.

It catalyses the reaction (S)-ureidoglycolate = urea + glyoxylate. Its pathway is nitrogen metabolism; (S)-allantoin degradation. Functionally, catalyzes the catabolism of the allantoin degradation intermediate (S)-ureidoglycolate, generating urea and glyoxylate. Involved in the utilization of allantoin as nitrogen source. In Pseudomonas paraeruginosa (strain DSM 24068 / PA7) (Pseudomonas aeruginosa (strain PA7)), this protein is Ureidoglycolate lyase.